Reading from the N-terminus, the 784-residue chain is Homeobox-leucine zipper protein ROC2 (784 aa).

The disordered stretch occupies residues 60 to 113; that stretch reads AESGDNMIRSRASDPLGGDEFESKSGSENVDGVSVDDQDPNQRPRKKRYHRHTQ. Positions 102 to 113 are enriched in basic residues; it reads RPRKKRYHRHTQ. Positions 104 to 163 form a DNA-binding region, homeobox; sequence RKKRYHRHTQHQIQEMEAFFKECPHPDDKQRKELSRELGLEPLQVKFWFQNKRTQMKNQH. Residues 158-234 are a coiled coil; it reads QMKNQHERHE…DRISAIAAKY (77 aa). One can recognise an START domain in the interval 286–523; that stretch reads SEVDKPMIVE…LDRQCERLAS (238 aa).

The protein belongs to the HD-ZIP homeobox family. Class IV subfamily.

It localises to the nucleus. In terms of biological role, probable transcription factor. This chain is Homeobox-leucine zipper protein ROC2 (ROC2), found in Oryza sativa subsp. japonica (Rice).